The chain runs to 447 residues: Cysteine--tRNA ligase (447 aa).

Cysteine 28 contributes to the Zn(2+) binding site. The 'HIGH' region signature appears at 30-40; that stretch reads PTVYNYIHIGN. The Zn(2+) site is built by cysteine 211, histidine 236, and glutamate 240. Positions 268-272 match the 'KMSKS' region motif; sequence KMSKS. Position 271 (lysine 271) interacts with ATP.

The protein belongs to the class-I aminoacyl-tRNA synthetase family. Monomer. Zn(2+) serves as cofactor.

The protein localises to the cytoplasm. The enzyme catalyses tRNA(Cys) + L-cysteine + ATP = L-cysteinyl-tRNA(Cys) + AMP + diphosphate. This Streptococcus agalactiae serotype Ia (strain ATCC 27591 / A909 / CDC SS700) protein is Cysteine--tRNA ligase.